A 130-amino-acid chain; its full sequence is Holo-[acyl-carrier-protein] synthase (130 aa).

Mg(2+)-binding residues include D8 and E62.

It belongs to the P-Pant transferase superfamily. AcpS family. Requires Mg(2+) as cofactor.

It is found in the cytoplasm. The enzyme catalyses apo-[ACP] + CoA = holo-[ACP] + adenosine 3',5'-bisphosphate + H(+). Its function is as follows. Transfers the 4'-phosphopantetheine moiety from coenzyme A to a Ser of acyl-carrier-protein. The polypeptide is Holo-[acyl-carrier-protein] synthase (Variovorax paradoxus (strain S110)).